Reading from the N-terminus, the 320-residue chain is Acetyl-coenzyme A carboxylase carboxyl transferase subunit alpha (320 aa).

Positions 41–295 (RIEEKAGQAL…GEAIAQAFDE (255 aa)) constitute a CoA carboxyltransferase C-terminal domain.

The protein belongs to the AccA family. As to quaternary structure, acetyl-CoA carboxylase is a heterohexamer composed of biotin carboxyl carrier protein (AccB), biotin carboxylase (AccC) and two subunits each of ACCase subunit alpha (AccA) and ACCase subunit beta (AccD).

Its subcellular location is the cytoplasm. The enzyme catalyses N(6)-carboxybiotinyl-L-lysyl-[protein] + acetyl-CoA = N(6)-biotinyl-L-lysyl-[protein] + malonyl-CoA. It functions in the pathway lipid metabolism; malonyl-CoA biosynthesis; malonyl-CoA from acetyl-CoA: step 1/1. In terms of biological role, component of the acetyl coenzyme A carboxylase (ACC) complex. First, biotin carboxylase catalyzes the carboxylation of biotin on its carrier protein (BCCP) and then the CO(2) group is transferred by the carboxyltransferase to acetyl-CoA to form malonyl-CoA. The sequence is that of Acetyl-coenzyme A carboxylase carboxyl transferase subunit alpha from Bradyrhizobium sp. (strain BTAi1 / ATCC BAA-1182).